The sequence spans 202 residues: MHNASDIQSALVPMVIEQTAKGERSFDIYSRLLKERIIFLVGQVEEHMANLIVAQLLFLESESPDKDIFLYINSPGGSVTAGMAIYDTMQFIKPNVSTVCIGQAASMGAFLLAGGEKGKRFCLPNSRVMIHQPLGGFQGQASDIAIHAQEILGIKHKLNLMLAEHTGQPLEVIERDTDRDNFMSATQAVDYGLVDAVMTKRG.

Serine 106 (nucleophile) is an active-site residue. Histidine 131 is an active-site residue.

Belongs to the peptidase S14 family. In terms of assembly, fourteen ClpP subunits assemble into 2 heptameric rings which stack back to back to give a disk-like structure with a central cavity, resembling the structure of eukaryotic proteasomes.

Its subcellular location is the cytoplasm. The catalysed reaction is Hydrolysis of proteins to small peptides in the presence of ATP and magnesium. alpha-casein is the usual test substrate. In the absence of ATP, only oligopeptides shorter than five residues are hydrolyzed (such as succinyl-Leu-Tyr-|-NHMec, and Leu-Tyr-Leu-|-Tyr-Trp, in which cleavage of the -Tyr-|-Leu- and -Tyr-|-Trp bonds also occurs).. Cleaves peptides in various proteins in a process that requires ATP hydrolysis. Has a chymotrypsin-like activity. Plays a major role in the degradation of misfolded proteins. This is ATP-dependent Clp protease proteolytic subunit from Shewanella sp. (strain MR-7).